The following is an 808-amino-acid chain: Sucrose synthase 4 (808 aa).

A GT-B glycosyltransferase region spans residues 277-754 (MVFNVVILSP…GLERIQEKYT (478 aa)).

Belongs to the glycosyltransferase 1 family. Plant sucrose synthase subfamily. Detected in the whole plant with highest expression in young rosette leaves and roots.

It carries out the reaction an NDP-alpha-D-glucose + D-fructose = a ribonucleoside 5'-diphosphate + sucrose + H(+). Its function is as follows. Sucrose-cleaving enzyme that provides UDP-glucose and fructose for various metabolic pathways. This chain is Sucrose synthase 4 (SUS4), found in Arabidopsis thaliana (Mouse-ear cress).